The chain runs to 458 residues: Exodeoxyribonuclease 7 large subunit (458 aa).

The protein belongs to the XseA family. As to quaternary structure, heterooligomer composed of large and small subunits.

It is found in the cytoplasm. The enzyme catalyses Exonucleolytic cleavage in either 5'- to 3'- or 3'- to 5'-direction to yield nucleoside 5'-phosphates.. Its function is as follows. Bidirectionally degrades single-stranded DNA into large acid-insoluble oligonucleotides, which are then degraded further into small acid-soluble oligonucleotides. The chain is Exodeoxyribonuclease 7 large subunit from Escherichia coli O17:K52:H18 (strain UMN026 / ExPEC).